The chain runs to 208 residues: Uracil phosphoribosyltransferase (208 aa).

5-phospho-alpha-D-ribose 1-diphosphate contacts are provided by residues R78, R103, and 130-138 (DPMLATGGT). Residues I193 and 198–200 (GDA) each bind uracil. Residue D199 participates in 5-phospho-alpha-D-ribose 1-diphosphate binding.

The protein belongs to the UPRTase family. The cofactor is Mg(2+).

The catalysed reaction is UMP + diphosphate = 5-phospho-alpha-D-ribose 1-diphosphate + uracil. Its pathway is pyrimidine metabolism; UMP biosynthesis via salvage pathway; UMP from uracil: step 1/1. With respect to regulation, allosterically activated by GTP. Functionally, catalyzes the conversion of uracil and 5-phospho-alpha-D-ribose 1-diphosphate (PRPP) to UMP and diphosphate. The chain is Uracil phosphoribosyltransferase from Maridesulfovibrio salexigens (strain ATCC 14822 / DSM 2638 / NCIMB 8403 / VKM B-1763) (Desulfovibrio salexigens).